The sequence spans 301 residues: Methionyl-tRNA formyltransferase (301 aa).

110–113 contacts (6S)-5,6,7,8-tetrahydrofolate; that stretch reads SLLP.

The protein belongs to the Fmt family.

It catalyses the reaction L-methionyl-tRNA(fMet) + (6R)-10-formyltetrahydrofolate = N-formyl-L-methionyl-tRNA(fMet) + (6S)-5,6,7,8-tetrahydrofolate + H(+). In terms of biological role, attaches a formyl group to the free amino group of methionyl-tRNA(fMet). The formyl group appears to play a dual role in the initiator identity of N-formylmethionyl-tRNA by promoting its recognition by IF2 and preventing the misappropriation of this tRNA by the elongation apparatus. The protein is Methionyl-tRNA formyltransferase of Anaplasma phagocytophilum (strain HZ).